Here is a 427-residue protein sequence, read N- to C-terminus: Homoprotocatechuate catabolism bifunctional isomerase/decarboxylase (427 aa).

Approximate repeat units follow at residues 1-202 and 203-405; these read MKGT…LENP and VVDE…VGDE. 3 residues coordinate a divalent metal cation: Glu-276, Glu-278, and Asp-307.

It belongs to the FAH family. As to quaternary structure, monomer. It depends on Mg(2+) as a cofactor.

The enzyme catalyses (2E,4Z)-5-hydroxypenta-2,4-diene-1,2,5-tricarboxylate = (3E,5R)-5-carboxy-2-oxohept-3-enedioate. It carries out the reaction (3E,5R)-5-carboxy-2-oxohept-3-enedioate + H(+) = (4Z)-2-oxohept-4-enedioate + CO2. It participates in aromatic compound metabolism; 4-hydroxyphenylacetate degradation; pyruvate and succinate semialdehyde from 4-hydroxyphenylacetate: step 4/7. The protein operates within aromatic compound metabolism; 4-hydroxyphenylacetate degradation; pyruvate and succinate semialdehyde from 4-hydroxyphenylacetate: step 5/7. Decarboxylates OPET (5-oxo-pent-3-ene-1,2,5-tricarboxylic acid) into HHDD (2-hydroxy-hept-2,4-diene-1,7-dioate) and isomerizes it to OHED (2-oxo-hept-3-ene-1,7-dioate). This is Homoprotocatechuate catabolism bifunctional isomerase/decarboxylase (hpcE) from Escherichia coli.